The following is a 190-amino-acid chain: NADH-dependent phenylglyoxylate dehydrogenase subunit gamma (190 aa).

As to quaternary structure, dimer of heteropentamers composed of an alpha (PadG), a beta (PadI), a gamma (PadE), a delta (PadF) and an epsilon (PadH) subunit.

It carries out the reaction phenylglyoxylate + NAD(+) + CoA = benzoyl-CoA + CO2 + NADH. Activated by magnesium ions and thiamine diphosphate. Its function is as follows. Involved in the anaerobic metabolism of phenylalanine and phenylacetate. Catalyzes the oxidative decarboxylation of phenylglyoxylate to benzoyl-CoA and CO(2). It can also react slowly with 2-oxo-3-methylbutanoate and use different electron acceptors such as benzyl viologen, methyl viologen, FAD or FMN, but NAD seems to be the physiological electron acceptor. Also catalyzes an isotope exchange between CO(2) and the carboxyl group which proves partial or complete reversibility of the oxidative decarboxylation reaction. In Aromatoleum evansii (Azoarcus evansii), this protein is NADH-dependent phenylglyoxylate dehydrogenase subunit gamma (padE).